The sequence spans 683 residues: Phenoloxidase 3 (683 aa).

Positions 1-48 (MADKKNLLLLFDHPTEPVFMDKGGNGTVFDVPASYVTDRYNKMCKKVQ) are excised as a propeptide. N-linked (GlcNAc...) asparagine glycosylation is present at Asn25. Positions 209, 213, and 239 each coordinate Cu cation. Catalysis depends on Glu351, which acts as the Proton acceptor. The N-linked (GlcNAc...) asparagine glycan is linked to Asn358. Positions 366, 370, and 406 each coordinate Cu cation. Residues Asn492 and Asn514 are each glycosylated (N-linked (GlcNAc...) asparagine). Cystine bridges form between Cys574-Cys617 and Cys576-Cys624.

The protein belongs to the tyrosinase family. Cu(2+) serves as cofactor. In terms of processing, upon activation, a trypsin type protease cleaves prophenol oxidase to yield the active enzyme.

It localises to the secreted. It catalyses the reaction 2 L-dopa + O2 = 2 L-dopaquinone + 2 H2O. The enzyme catalyses L-tyrosine + O2 = L-dopaquinone + H2O. Functionally, this is a copper-containing oxidase that functions in the formation of pigments such as melanins and other polyphenolic compounds. Catalyzes the rate-limiting conversions of tyrosine to DOPA, DOPA to DOPA-quinone and possibly 5,6 dihydroxyindole to indole-5'6 quinone. In Drosophila erecta (Fruit fly), this protein is Phenoloxidase 3 (PPO3).